The primary structure comprises 371 residues: Peptidyl-prolyl cis-trans isomerase D (371 aa).

Positions 8–172 constitute a PPIase cyclophilin-type domain; it reads FFDIAIGGQL…EPVVIADCGQ (165 aa). Residues 175–202 are disordered; it reads SDDPFLAERTSTDGDPYEDYPDDEDQEL. Residues 189–201 are compositionally biased toward acidic residues; it reads DPYEDYPDDEDQE. TPR repeat units lie at residues 212–245, 265–303, and 308–341; these read AKTI…LDVH, APLL…LELS, and AKAY…LPED.

The protein belongs to the cyclophilin-type PPIase family. PPIase D subfamily.

The protein localises to the cytoplasm. The catalysed reaction is [protein]-peptidylproline (omega=180) = [protein]-peptidylproline (omega=0). PPIases accelerate the folding of proteins. It catalyzes the cis-trans isomerization of proline imidic peptide bonds in oligopeptides. The polypeptide is Peptidyl-prolyl cis-trans isomerase D (Cyp40) (Amanita muscaria (Fly agaric)).